A 72-amino-acid chain; its full sequence is Large ribosomal subunit protein bL32 (72 aa).

The protein belongs to the bacterial ribosomal protein bL32 family.

The protein is Large ribosomal subunit protein bL32 of Dehalococcoides mccartyi (strain ATCC BAA-2266 / KCTC 15142 / 195) (Dehalococcoides ethenogenes (strain 195)).